Consider the following 473-residue polypeptide: 23S rRNA (uracil(1939)-C(5))-methyltransferase RlmD (473 aa).

Residues 6–27 (KPSKGKNKSNVKGRVRGAGSGE) are disordered. Residues 8–20 (SKGKNKSNVKGRV) show a composition bias toward basic residues. The TRAM domain occupies 42–99 (DDINAANEAVTIDGMDWQGQGVARGDTLYFVDGALPGETVEIKALSSNKQIVNAKVTK). [4Fe-4S] cluster is bound by residues Cys112, Cys118, Cys121, and Cys199. The S-adenosyl-L-methionine site is built by Gln304, Phe333, Asn338, Glu354, Asp381, and Asp402. The active-site Nucleophile is Cys428.

The protein belongs to the class I-like SAM-binding methyltransferase superfamily. RNA M5U methyltransferase family. RlmD subfamily.

It carries out the reaction uridine(1939) in 23S rRNA + S-adenosyl-L-methionine = 5-methyluridine(1939) in 23S rRNA + S-adenosyl-L-homocysteine + H(+). Functionally, catalyzes the formation of 5-methyl-uridine at position 1939 (m5U1939) in 23S rRNA. This chain is 23S rRNA (uracil(1939)-C(5))-methyltransferase RlmD, found in Alteromonas naphthalenivorans.